The chain runs to 91 residues: C-C motif chemokine 5 (91 aa).

An N-terminal signal peptide occupies residues 1–23 (MKVFAAALAVILATATFCTPASA). 2 disulfides stabilise this stretch: cysteine 33–cysteine 57 and cysteine 34–cysteine 73.

Belongs to the intercrine beta (chemokine CC) family.

It is found in the secreted. In terms of biological role, chemoattractant for blood monocytes, memory T-helper cells and eosinophils. Causes the release of histamine from basophils and activates eosinophils. May activate several chemokine receptors including CCR1, CCR3, CCR4 and CCR5. May also be an agonist of the G protein-coupled receptor GPR75. Together with GPR75, may play a role in neuron survival through activation of a downstream signaling pathway involving the PI3, Akt and MAP kinases. By activating GPR75 may also play a role in insulin secretion by islet cells. The chain is C-C motif chemokine 5 (CCL5) from Equus caballus (Horse).